The chain runs to 378 residues: Phosphoglycerate kinase (378 aa).

Residues V1, D2, F3, N4, N16, R17, S40, H41, G43, R44, L99, R100, H147, and R148 each coordinate (2R)-3-phosphoglycerate. G191 lines the ADP pocket. Position 191 (G191) interacts with CDP. Residues A192 and K193 each coordinate AMP. A192 is a binding site for ATP. A192 contributes to the Mg(2+) binding site. D196 lines the CDP pocket. D196 contacts Mg(2+). K197 contacts AMP. Residue K197 coordinates ATP. G215 lines the ADP pocket. G215 contributes to the CDP binding site. AMP is bound by residues G216 and G288. G216 and G288 together coordinate ATP. CDP is bound by residues G313 and F318. Position 318 (F318) interacts with ADP. E319 contributes to the AMP binding site. ATP contacts are provided by E319, D351, and T352. A Mg(2+)-binding site is contributed by D351.

This sequence belongs to the phosphoglycerate kinase family. In terms of assembly, monomer. It depends on Mg(2+) as a cofactor.

The enzyme catalyses (2R)-3-phosphoglycerate + ATP = (2R)-3-phospho-glyceroyl phosphate + ADP. It participates in carbohydrate degradation; glycolysis; pyruvate from D-glyceraldehyde 3-phosphate: step 2/5. This Condylostoma magnum protein is Phosphoglycerate kinase (PGK).